The chain runs to 555 residues: Formate--tetrahydrofolate ligase (555 aa).

65 to 72 (TPAGEGKT) is a binding site for ATP.

This sequence belongs to the formate--tetrahydrofolate ligase family.

It carries out the reaction (6S)-5,6,7,8-tetrahydrofolate + formate + ATP = (6R)-10-formyltetrahydrofolate + ADP + phosphate. It functions in the pathway one-carbon metabolism; tetrahydrofolate interconversion. The polypeptide is Formate--tetrahydrofolate ligase (Thermoanaerobacter sp. (strain X514)).